We begin with the raw amino-acid sequence, 120 residues long: Large ribosomal subunit protein bL19c (120 aa).

The protein belongs to the bacterial ribosomal protein bL19 family.

Its subcellular location is the plastid. It is found in the chloroplast. This is Large ribosomal subunit protein bL19c from Thalassiosira pseudonana (Marine diatom).